The primary structure comprises 521 residues: Caspase-10 (521 aa).

The propeptide occupies Met1 to Asp219. 2 DED domains span residues Ser19–Cys97 and Leu114–Lys187. Composition is skewed to polar residues over residues Ser231 to Ala248 and Ala259 to Thr268. The tract at residues Ser231–Ser269 is disordered. Residues His358 and Cys401 contribute to the active site.

It belongs to the peptidase C14A family. As to quaternary structure, heterotetramer that consists of two anti-parallel arranged heterodimers, each one formed by a 23/17 kDa (p23/17) (depending on the splicing events) and a 12 kDa (p12) subunit. Self-associates. Interacts with FADD and CASP8. Found in a Fas signaling complex consisting of FAS, FADD, CASP8 and CASP10. Interacts with RFFL and RNF34; negatively regulate CASP10 through proteasomal degradation. Interacts with RIOK3. Cleavage by granzyme B and autocatalytic activity generate the two active subunits. Detectable in most tissues. Lowest expression is seen in brain, kidney, prostate, testis and colon.

The catalysed reaction is Strict requirement for Asp at position P1 and has a preferred cleavage sequence of Leu-Gln-Thr-Asp-|-Gly.. Involved in the activation cascade of caspases responsible for apoptosis execution. Recruited to both Fas- and TNFR-1 receptors in a FADD dependent manner. May participate in the granzyme B apoptotic pathways. Cleaves and activates effector caspases CASP3, CASP4, CASP6, CASP7, CASP8 and CASP9. Hydrolyzes the small- molecule substrates, Tyr-Val-Ala-Asp-|-AMC and Asp-Glu-Val-Asp-|-AMC. Functionally, isoform 7 can enhance NF-kappaB activity but promotes only slight apoptosis. In terms of biological role, isoform C is proteolytically inactive. The polypeptide is Caspase-10 (CASP10) (Homo sapiens (Human)).